Reading from the N-terminus, the 472-residue chain is Cell division protein FtsP (472 aa).

Positions 1 to 27 (MSLSRRQFIQASGIALCAGAMPLTARA) form a signal peptide, tat-type signal.

It belongs to the FtsP family. Post-translationally, predicted to be exported by the Tat system. The position of the signal peptide cleavage has not been experimentally proven.

The protein resides in the periplasm. Functionally, cell division protein that is required for growth during stress conditions. May be involved in protecting or stabilizing the divisomal assembly under conditions of stress. In Dickeya dadantii (strain 3937) (Erwinia chrysanthemi (strain 3937)), this protein is Cell division protein FtsP.